We begin with the raw amino-acid sequence, 387 residues long: 4-hydroxy-3-methylbut-2-en-1-yl diphosphate synthase (flavodoxin) (387 aa).

[4Fe-4S] cluster-binding residues include Cys-280, Cys-283, Cys-315, and Glu-322.

Belongs to the IspG family. It depends on [4Fe-4S] cluster as a cofactor.

It catalyses the reaction (2E)-4-hydroxy-3-methylbut-2-enyl diphosphate + oxidized [flavodoxin] + H2O + 2 H(+) = 2-C-methyl-D-erythritol 2,4-cyclic diphosphate + reduced [flavodoxin]. It participates in isoprenoid biosynthesis; isopentenyl diphosphate biosynthesis via DXP pathway; isopentenyl diphosphate from 1-deoxy-D-xylulose 5-phosphate: step 5/6. Functionally, converts 2C-methyl-D-erythritol 2,4-cyclodiphosphate (ME-2,4cPP) into 1-hydroxy-2-methyl-2-(E)-butenyl 4-diphosphate. This is 4-hydroxy-3-methylbut-2-en-1-yl diphosphate synthase (flavodoxin) from Mycobacterium bovis (strain BCG / Pasteur 1173P2).